A 478-amino-acid polypeptide reads, in one-letter code: Serine/threonine-protein phosphatase 2A activator 1 (478 aa).

The segment at 359–478 (DPSAIPPPSR…DITTKAPWAK (120 aa)) is disordered. Residues 396–419 (APWATASQSTPPPSTGTAAPWATS) show a composition bias toward low complexity.

The protein belongs to the PTPA-type PPIase family.

It is found in the cytoplasm. It localises to the nucleus. It carries out the reaction [protein]-peptidylproline (omega=180) = [protein]-peptidylproline (omega=0). Functionally, PPIases accelerate the folding of proteins. It catalyzes the cis-trans isomerization of proline imidic peptide bonds in oligopeptides. Acts as a regulatory subunit for PP2A-like phosphatases modulating their activity or substrate specificity, probably by inducing a conformational change in the catalytic subunit, a direct target of the PPIase. Can reactivate inactive phosphatase PP2A-phosphatase methylesterase complexes (PP2Ai) in presence of ATP and Mg(2+) by dissociating the inactive form from the complex. This Aspergillus oryzae (strain ATCC 42149 / RIB 40) (Yellow koji mold) protein is Serine/threonine-protein phosphatase 2A activator 1 (rrd1).